The chain runs to 1750 residues: Brefeldin A-inhibited guanine nucleotide-exchange protein 3 (1750 aa).

At Ala2 the chain carries N-acetylalanine. Disordered regions lie at residues 44–65 (LRSP…IPGP) and 565–596 (EEGS…SSGN). Residues 47-61 (PENSSPVADSESGSS) are compositionally biased toward polar residues. Positions 565 to 588 (EEGSHPVENGKGDGGHGGFERSDS) are enriched in basic and acidic residues. Phosphoserine is present on Ser586. Residues 601-788 (AIEQRRAYKL…RALYERISRN (188 aa)) form the SEC7 domain. Glu703 is a catalytic residue. Ser1307 is subject to Phosphoserine.

In terms of assembly, homodimer.

The protein resides in the cytoplasm. It is found in the cytosol. Its subcellular location is the membrane. Its activity is regulated as follows. Inhibited by brefeldin A. Activates the ARF proteins by exchanging bound GDP for free GTP. Plays a role in vesicular protein sorting. Involved both in the nuclear division phase and in the nuclear fusion phase. In Arabidopsis thaliana (Mouse-ear cress), this protein is Brefeldin A-inhibited guanine nucleotide-exchange protein 3 (BIG3).